A 510-amino-acid chain; its full sequence is NAD(P)H-quinone oxidoreductase subunit 2 A, chloroplastic (510 aa).

Transmembrane regions (helical) follow at residues 31–51 (FIFP…IDLT), 59–79 (WFYF…LFRW), 99–119 (IFQF…VEYI), 124–144 (MAIT…MFLC), 149–169 (LITI…LSGY), 184–204 (LLMG…LYGL), 229–249 (ISIA…LAPF), 261–281 (PTPV…ALAT), 295–315 (WHLL…LLAI), 323–343 (MLAY…IVGD), 354–374 (YMLF…LFGL), 395–415 (ALSL…AGFF), 418–438 (LYLF…IGLL), and 484–504 (MTVC…ILAI).

This sequence belongs to the complex I subunit 2 family. In terms of assembly, NDH is composed of at least 16 different subunits, 5 of which are encoded in the nucleus.

The protein localises to the plastid. Its subcellular location is the chloroplast thylakoid membrane. It catalyses the reaction a plastoquinone + NADH + (n+1) H(+)(in) = a plastoquinol + NAD(+) + n H(+)(out). It carries out the reaction a plastoquinone + NADPH + (n+1) H(+)(in) = a plastoquinol + NADP(+) + n H(+)(out). Functionally, NDH shuttles electrons from NAD(P)H:plastoquinone, via FMN and iron-sulfur (Fe-S) centers, to quinones in the photosynthetic chain and possibly in a chloroplast respiratory chain. The immediate electron acceptor for the enzyme in this species is believed to be plastoquinone. Couples the redox reaction to proton translocation, and thus conserves the redox energy in a proton gradient. In Saccharum hybrid (Sugarcane), this protein is NAD(P)H-quinone oxidoreductase subunit 2 A, chloroplastic.